We begin with the raw amino-acid sequence, 224 residues long: Germin-like protein 8-11 (224 aa).

A signal peptide spans 1–22 (MASSSFLLLATLLAMASWQGMA). Residues cysteine 32 and cysteine 47 are joined by a disulfide bond. The 151-residue stretch at 62 to 212 (AMLDTPRKTN…AFQVEKGTID (151 aa)) folds into the Cupin type-1 domain. N-linked (GlcNAc...) asparagine glycosylation is present at asparagine 76. 4 residues coordinate Mn(2+): histidine 109, histidine 111, glutamate 116, and histidine 157.

This sequence belongs to the germin family. In terms of assembly, oligomer (believed to be a pentamer but probably hexamer).

It is found in the secreted. It localises to the extracellular space. The protein localises to the apoplast. Functionally, plays a role in broad-spectrum disease resistance. Probably has no oxalate oxidase activity even if the active site is conserved. The chain is Germin-like protein 8-11 from Oryza sativa subsp. japonica (Rice).